Reading from the N-terminus, the 198-residue chain is Holliday junction branch migration complex subunit RuvA (198 aa).

The segment at 1–63 (MYDYIKGQLT…EDAQLLFGFH (63 aa)) is domain I. Positions 64–142 (SEEEKDVFLK…EAPKEESSKP (79 aa)) are domain II. Residues 143–147 (PKAKQ) form a flexible linker region. Residues 148–198 (QGNEQLDEAVEALLALGYKATELKKIRAFFEGTSETAEQYIKSALKMLMKG) form a domain III region.

Belongs to the RuvA family. In terms of assembly, homotetramer. Forms an RuvA(8)-RuvB(12)-Holliday junction (HJ) complex. HJ DNA is sandwiched between 2 RuvA tetramers; dsDNA enters through RuvA and exits via RuvB. An RuvB hexamer assembles on each DNA strand where it exits the tetramer. Each RuvB hexamer is contacted by two RuvA subunits (via domain III) on 2 adjacent RuvB subunits; this complex drives branch migration. In the full resolvosome a probable DNA-RuvA(4)-RuvB(12)-RuvC(2) complex forms which resolves the HJ.

Its subcellular location is the cytoplasm. Functionally, the RuvA-RuvB-RuvC complex processes Holliday junction (HJ) DNA during genetic recombination and DNA repair, while the RuvA-RuvB complex plays an important role in the rescue of blocked DNA replication forks via replication fork reversal (RFR). RuvA specifically binds to HJ cruciform DNA, conferring on it an open structure. The RuvB hexamer acts as an ATP-dependent pump, pulling dsDNA into and through the RuvAB complex. HJ branch migration allows RuvC to scan DNA until it finds its consensus sequence, where it cleaves and resolves the cruciform DNA. This Streptococcus equi subsp. equi (strain 4047) protein is Holliday junction branch migration complex subunit RuvA.